The primary structure comprises 48 residues: U-actitoxin-Cgg3 (48 aa).

3 cysteine pairs are disulfide-bonded: Cys5–Cys41, Cys7–Cys33, and Cys23–Cys42. Ser46 bears the Serine amide mark. The propeptide at 47–48 is removed in mature form; it reads GR.

It belongs to the sea anemone type 3 (BDS) potassium channel toxin family.

Its subcellular location is the secreted. Functionally, neurotoxin that induces paralysis when injected into crabs. May function in antimicrobial activity as it displays inhibitory activity towards the B.licheniformis enzyme subtilisin A (SUBTA) and the recombinant S.maltophilia protease 1 (rStmPr1) enzyme. Also displays inhibitory activity against various proteases including the porcine pancreatic elastase (PPE) and proteinase K (PK). The sequence is that of U-actitoxin-Cgg3 from Condylactis gigantea (Giant Caribbean anemone).